The sequence spans 234 residues: MEGGAYGAGKAGGAFDPYTLVRQPHTILRVVSWVFSIVVFGSIVNEGYLNNPEEEEEFCIYNRNPNACSYGVTVGVLAFLTCLVYLALDVYFPQISSVKDRKKAVLSDIGVSAFWAFFWFVGFCFLANQWQVSKPKDNPLNEGTDAARAAIAFSFFSIFTWAGQAVLAFQRYQIGADSALFSQDYMDPSQDSSMPYAPYVEPSAGSDPTGMGGTYQHPANAFDAEPQGYQSQGY.

At Met-1 the chain carries N-acetylmethionine. Residues 1-23 lie on the Cytoplasmic side of the membrane; that stretch reads MEGGAYGAGKAGGAFDPYTLVRQ. The MARVEL domain maps to 20–173; sequence LVRQPHTILR…QAVLAFQRYQ (154 aa). Residues 24–44 form a helical membrane-spanning segment; it reads PHTILRVVSWVFSIVVFGSIV. Topologically, residues 45 to 71 are lumenal; sequence NEGYLNNPEEEEEFCIYNRNPNACSYG. A helical transmembrane segment spans residues 72–92; that stretch reads VTVGVLAFLTCLVYLALDVYF. The Cytoplasmic portion of the chain corresponds to 93–104; it reads PQISSVKDRKKA. A helical transmembrane segment spans residues 105–125; it reads VLSDIGVSAFWAFFWFVGFCF. The Lumenal portion of the chain corresponds to 126 to 148; it reads LANQWQVSKPKDNPLNEGTDAAR. A helical membrane pass occupies residues 149-169; the sequence is AAIAFSFFSIFTWAGQAVLAF. The Cytoplasmic segment spans residues 170–234; sequence QRYQIGADSA…EPQGYQSQGY (65 aa). The disordered stretch occupies residues 201–234; sequence EPSAGSDPTGMGGTYQHPANAFDAEPQGYQSQGY.

This sequence belongs to the synaptogyrin family. Nervous system (at protein level).

It is found in the cytoplasmic vesicle. Its subcellular location is the secretory vesicle. The protein localises to the synaptic vesicle membrane. It localises to the melanosome. May play a role in regulated exocytosis. Modulates the localization of synaptophysin/SYP into synaptic-like microvesicles and may therefore play a role in synaptic-like microvesicle formation and/or maturation. Involved in the regulation of short-term and long-term synaptic plasticity. The polypeptide is Synaptogyrin-1 (Rattus norvegicus (Rat)).